Here is a 234-residue protein sequence, read N- to C-terminus: Carboxy-S-adenosyl-L-methionine synthase (234 aa).

Residues Y35, 60–62, 83–84, N124, and R191 each bind S-adenosyl-L-methionine; these read GSS and DN.

Belongs to the class I-like SAM-binding methyltransferase superfamily. Cx-SAM synthase family. In terms of assembly, homodimer.

The enzyme catalyses prephenate + S-adenosyl-L-methionine = carboxy-S-adenosyl-L-methionine + 3-phenylpyruvate + H2O. Its function is as follows. Catalyzes the conversion of S-adenosyl-L-methionine (SAM) to carboxy-S-adenosyl-L-methionine (Cx-SAM). The protein is Carboxy-S-adenosyl-L-methionine synthase of Nautilia profundicola (strain ATCC BAA-1463 / DSM 18972 / AmH).